Consider the following 920-residue polypeptide: Nonribosomal peptide synthetase atrA (920 aa).

An adenylation (A) domain region spans residues 13–428 (AAAQERCGRV…AGRLKETMII (416 aa)). The Carrier domain occupies 558 to 637 (PPKDELERSL…ELSAALHDLQ (80 aa)). Serine 595 is modified (O-(pantetheine 4'-phosphoryl)serine). The segment at 656–905 (PLWLIHPGVG…YTMLAPEHVF (250 aa)) is thioesterase (TE) domain.

The protein belongs to the NRP synthetase family.

The catalysed reaction is 2 3-(4-hydroxyphenyl)pyruvate + 2 ATP = atromentin + 2 AMP + 2 diphosphate + H(+). In terms of biological role, nonribosomal peptide synthetase that mediates the biosynthesis of atromentin. AtrA first activates 4-hydroxyphenylpyruvate (HPPA) through its A domain to AMP-HPPA. The HPPA unit is then loaded to the T domain and eventually transferred to the TE domain. Another HPPA unit is then loaded onto the T domain. The TE domain then catalyzes the condensation of the two HPPA units and the release of atromentin via cyclization. In Aspergillus terreus (strain NIH 2624 / FGSC A1156), this protein is Nonribosomal peptide synthetase atrA.